Reading from the N-terminus, the 614-residue chain is Phosphomethylpyrimidine synthase (614 aa).

Substrate contacts are provided by residues asparagine 230, methionine 259, tyrosine 288, histidine 324, 344-346 (SRG), 385-388 (DGLR), and glutamate 424. Histidine 428 is a binding site for Zn(2+). Tyrosine 451 is a substrate binding site. Residue histidine 492 coordinates Zn(2+). Cysteine 572, cysteine 575, and cysteine 580 together coordinate [4Fe-4S] cluster.

This sequence belongs to the ThiC family. In terms of assembly, homodimer. Requires [4Fe-4S] cluster as cofactor.

The enzyme catalyses 5-amino-1-(5-phospho-beta-D-ribosyl)imidazole + S-adenosyl-L-methionine = 4-amino-2-methyl-5-(phosphooxymethyl)pyrimidine + CO + 5'-deoxyadenosine + formate + L-methionine + 3 H(+). The protein operates within cofactor biosynthesis; thiamine diphosphate biosynthesis. In terms of biological role, catalyzes the synthesis of the hydroxymethylpyrimidine phosphate (HMP-P) moiety of thiamine from aminoimidazole ribotide (AIR) in a radical S-adenosyl-L-methionine (SAM)-dependent reaction. This is Phosphomethylpyrimidine synthase from Stenotrophomonas maltophilia (strain K279a).